The primary structure comprises 533 residues: Glucomannan 4-beta-mannosyltransferase 9 (533 aa).

Residues 37 to 57 (IVPALRLGVYICLTMSVMLFV) form a helical membrane-spanning segment. Residue Asp-136 is part of the active site. Substrate-binding residues include Asp-195 and Asp-197. Asp-289 is a catalytic residue. 4 helical membrane passes run 368–388 (LVAH…TVLV), 404–426 (VITL…WILF), 483–503 (VLEL…AFFG), and 510–530 (YLFA…GTIV).

This sequence belongs to the glycosyltransferase 2 family. Plant cellulose synthase-like A subfamily. As to expression, expressed in cotyledons at the base of the hypocotyls, in root elongation zone, lateral root primordia, vascular system of young leaves, abscission zone of the pedicle,.

The protein resides in the golgi apparatus membrane. The enzyme catalyses GDP-mannose + (glucomannan)n = GDP + (glucomannan)n+1.. Functionally, possesses glucomannan synthase and mannan synthase activities in vitro. Mannan synthase consists of a 4-beta-mannosyltransferase activity on mannan using GDP-mannose. The beta-1,4-mannan product is the backbone for galactomannan synthesis by galactomannan galactosyltransferase. Galactomannan is a noncellulosic polysaccharides of plant cell wall. Required for lateral root development. The polypeptide is Glucomannan 4-beta-mannosyltransferase 9 (Arabidopsis thaliana (Mouse-ear cress)).